A 971-amino-acid chain; its full sequence is Exportin-2 (971 aa).

One can recognise an Importin N-terminal domain in the interval 29 to 102 (AEKFLESVEG…KANIVNLMLT (74 aa)).

This sequence belongs to the XPO2/CSE1 family. As to quaternary structure, interacts with cftr. In terms of tissue distribution, detected in larval gut, liver, exocrine pancreas and part of the brain and retina at 96 hpf.

The protein localises to the cytoplasm. It localises to the nucleus. It is found in the apical cell membrane. The protein resides in the basal cell membrane. Its subcellular location is the lateral cell membrane. In terms of biological role, export receptor for importin alpha. Mediates importin-alpha re-export from the nucleus to the cytoplasm after import substrates have been released into the nucleoplasm. Negatively regulates fluid secretion and plays a role in fluid homeostasis by down-regulating cftr activity. In Danio rerio (Zebrafish), this protein is Exportin-2 (cse1l).